A 59-amino-acid chain; its full sequence is Cecropin-A (59 aa).

An N-terminal signal peptide occupies residues 1-23; sequence MNFTKLFLLIAMAVLLLTGQSEA. Positions 58–59 are cleaved as a propeptide — removed in mature form (AeaeCec2); the sequence is GK.

In terms of tissue distribution, hemolymph (at protein level).

Its subcellular location is the secreted. In terms of biological role, antimicrobial peptide. Antibacterial activity against Gram-negative bacteria E.coli D22 and D31, E.carotovora, K.pneumoniae, P.aeruginosa, S.typhimurium, E.cloacae B12 and X.campestris and Gram-positive bacteria A.viridans, M.luteus, B.megaterium and S.pyogenes. Possesses antifungal activity against F.oxysporum, F.culmorum and N.crassa, C.albicans, C.neoformans and S.cerevisiae. No activity against Gram-negative S.marcescens Db11, Gram-positive B.cereus, B.subtilis, B.thuringiensis, S.aureus and L.monocytogenes, the fungi A.fumigatus and B.bassiana and C.glabrata. Partially neutralizes lipopolysaccharides (LPS). Exhibits anti-inflammatory properties: inhibits LPS-induced iNOS/NOS2 transcription, nitric oxide (NO) and pro-inflammatory cytokine production in mouse macrophages and human peripheral blood mononuclear cells (PBMCs); inhibits LPS-induced activation of MAPK and NF-kappa-B signaling pathways in mouse macrophages. The protein is Cecropin-A (CECA) of Aedes aegypti (Yellowfever mosquito).